We begin with the raw amino-acid sequence, 290 residues long: Pyridoxal kinase PdxY (290 aa).

Residues Ser12 and Thr47–Gln48 each bind substrate. Residues Asp114, Glu151, Lys184, and Arg211–Leu214 each bind ATP. Position 225 (Asp225) interacts with substrate.

Belongs to the pyridoxine kinase family. PdxY subfamily. As to quaternary structure, homodimer. Requires Mg(2+) as cofactor.

The enzyme catalyses pyridoxal + ATP = pyridoxal 5'-phosphate + ADP + H(+). The protein operates within cofactor metabolism; pyridoxal 5'-phosphate salvage; pyridoxal 5'-phosphate from pyridoxal: step 1/1. Its function is as follows. Pyridoxal kinase involved in the salvage pathway of pyridoxal 5'-phosphate (PLP). Catalyzes the phosphorylation of pyridoxal to PLP. The protein is Pyridoxal kinase PdxY of Pseudomonas putida (strain ATCC 47054 / DSM 6125 / CFBP 8728 / NCIMB 11950 / KT2440).